The primary structure comprises 250 residues: ATP synthase subunit a (250 aa).

6 consecutive transmembrane segments (helical) span residues 29–49 (ASLF…FATS), 84–104 (FFPL…LGMV), 114–134 (IIVT…YGFI), 143–163 (LFVP…IEII), 185–205 (ITLK…ALGI), and 208–228 (AILP…VAFL).

Belongs to the ATPase A chain family. As to quaternary structure, F-type ATPases have 2 components, CF(1) - the catalytic core - and CF(0) - the membrane proton channel. CF(1) has five subunits: alpha(3), beta(3), gamma(1), delta(1), epsilon(1). CF(0) has three main subunits: a(1), b(2) and c(9-12). The alpha and beta chains form an alternating ring which encloses part of the gamma chain. CF(1) is attached to CF(0) by a central stalk formed by the gamma and epsilon chains, while a peripheral stalk is formed by the delta and b chains.

The protein localises to the cell inner membrane. Its function is as follows. Key component of the proton channel; it plays a direct role in the translocation of protons across the membrane. This is ATP synthase subunit a from Rhizobium rhizogenes (strain K84 / ATCC BAA-868) (Agrobacterium radiobacter).